The sequence spans 365 residues: MKHYRKIIHIDMDAFYASIEQRDNKKLKGRPVIVGGNPQSRGVVATCSYEARKFGIHSAMPSAVAYNRCPYAVFVRPRFDVYKSVSEKIRDIFYRYTDLVEPLSLDEAYLDVTKNKKNIDSSIEIAKQIKKDIFREVGLTSSAGVSYNKFLAKIASDLRKPNGLTVITEENAQDFLDKLPVNKFFGVGKVTSNTLKNLGIKTGYDLRCLNLFELENIFKKRGYELYKFARGIDDRPVEPNRVRKSVGAETTLSHNLDIDEEETRNILDELCEEVCHRLKNSEKFGKTLTLKIKYEDFTKITRSLSLEHYIDEYNDIRSGVDNLLRNVEVNGKQIRLLGVTISNLSDKKETYKDITLFEYMDSIQM.

A UmuC domain is found at isoleucine 7–glycine 188. Positions 11 and 106 each coordinate Mg(2+). Glutamate 107 is a catalytic residue.

It belongs to the DNA polymerase type-Y family. In terms of assembly, monomer. Mg(2+) serves as cofactor.

It is found in the cytoplasm. It catalyses the reaction DNA(n) + a 2'-deoxyribonucleoside 5'-triphosphate = DNA(n+1) + diphosphate. Poorly processive, error-prone DNA polymerase involved in untargeted mutagenesis. Copies undamaged DNA at stalled replication forks, which arise in vivo from mismatched or misaligned primer ends. These misaligned primers can be extended by PolIV. Exhibits no 3'-5' exonuclease (proofreading) activity. May be involved in translesional synthesis, in conjunction with the beta clamp from PolIII. In Clostridioides difficile (strain 630) (Peptoclostridium difficile), this protein is DNA polymerase IV.